The following is a 591-amino-acid chain: V-type ATP synthase alpha chain (591 aa).

An ATP-binding site is contributed by 233–240 (GPFGAGKT).

This sequence belongs to the ATPase alpha/beta chains family.

It catalyses the reaction ATP + H2O + 4 H(+)(in) = ADP + phosphate + 5 H(+)(out). Functionally, produces ATP from ADP in the presence of a proton gradient across the membrane. The V-type alpha chain is a catalytic subunit. This chain is V-type ATP synthase alpha chain, found in Streptococcus pneumoniae serotype 19F (strain G54).